Consider the following 428-residue polypeptide: Serine--tRNA ligase (428 aa).

An L-serine-binding site is contributed by 235–237; it reads TAE. 266–268 serves as a coordination point for ATP; it reads RSE. An L-serine-binding site is contributed by Glu-289. 353–356 is a binding site for ATP; sequence EISS. Ser-389 contributes to the L-serine binding site.

It belongs to the class-II aminoacyl-tRNA synthetase family. Type-1 seryl-tRNA synthetase subfamily. As to quaternary structure, homodimer. The tRNA molecule binds across the dimer.

It is found in the cytoplasm. The enzyme catalyses tRNA(Ser) + L-serine + ATP = L-seryl-tRNA(Ser) + AMP + diphosphate + H(+). It catalyses the reaction tRNA(Sec) + L-serine + ATP = L-seryl-tRNA(Sec) + AMP + diphosphate + H(+). It functions in the pathway aminoacyl-tRNA biosynthesis; selenocysteinyl-tRNA(Sec) biosynthesis; L-seryl-tRNA(Sec) from L-serine and tRNA(Sec): step 1/1. In terms of biological role, catalyzes the attachment of serine to tRNA(Ser). Is also able to aminoacylate tRNA(Sec) with serine, to form the misacylated tRNA L-seryl-tRNA(Sec), which will be further converted into selenocysteinyl-tRNA(Sec). The sequence is that of Serine--tRNA ligase from Shewanella sp. (strain W3-18-1).